The primary structure comprises 938 residues: Kinesin-like protein KIN-7B (938 aa).

The Kinesin motor domain maps to 29-348 (KILVTVRMRP…LSFAMSAKEV (320 aa)). 113–120 (GQTSSGKT) serves as a coordination point for ATP. Residues 357-431 (VVSEKKLLKH…DLERKAKERK (75 aa)) are a coiled coil. Positions 450–481 (TKEESIPSKSVPSSRRTARDRRKDNVRQSLTS) are disordered. A coiled-coil region spans residues 555 to 590 (KANLKEEINRLNSQEIAALEKKLECVQNTIDMLVSS). The segment at 628-678 (CSPLSGTENKDPESNVVSANSAPVSFGATPPKRDDNRCRTQSREGTPVSRQ) is disordered. Over residues 641–652 (SNVVSANSAPVS) the composition is skewed to low complexity. Positions 658–669 (PKRDDNRCRTQS) are enriched in basic and acidic residues.

Belongs to the TRAFAC class myosin-kinesin ATPase superfamily. Kinesin family. KIN-7 subfamily. As to quaternary structure, interacts with ANP3. Interacts with TIO/FU. Expressed in roots, stems, flowers, pollen mother cells and embryos.

Its subcellular location is the cytoplasm. The protein resides in the cytoskeleton. It localises to the phragmoplast. Functionally, probable plus end-directed motor protein that functions in the NACK-PQR (ANP3-MKK6-MPK4) MAP kinase signaling pathway, which is essential for somatic cell cytokinesis, especially for the cell-plate formation and its expansion. May regulate the activity and the localization of ANP3, probably by association through the non-catalytic region of the kinase. Functionally redundant with NACK1 and essential to promote the progression of cytokinesis and for cellularization (formation of the cell plate) during microgametogenesis and megagametogenesis. The chain is Kinesin-like protein KIN-7B from Arabidopsis thaliana (Mouse-ear cress).